A 188-amino-acid chain; its full sequence is MPDPTQNPNVTPELEQHAAPEAAAEAAPESSADVMPSLEETLRQAELKAAEHYDAWLRAKAEGENIRRRAQEDIAKATKFAAEKFASAMVPVKDSLEAALAVENQTVEKLREGVELTLKQLVSAFEGAGLAEENPLGQKFDPNKHQAISAIEAEGEPNTVINVLQKGYLLHERVVRPALVVVSKAKAQ.

Over residues 1–10 the composition is skewed to polar residues; it reads MPDPTQNPNV. The disordered stretch occupies residues 1–35; it reads MPDPTQNPNVTPELEQHAAPEAAAEAAPESSADVM. Residues 19-32 are compositionally biased toward low complexity; sequence APEAAAEAAPESSA.

Belongs to the GrpE family. As to quaternary structure, homodimer.

The protein localises to the cytoplasm. Participates actively in the response to hyperosmotic and heat shock by preventing the aggregation of stress-denatured proteins, in association with DnaK and GrpE. It is the nucleotide exchange factor for DnaK and may function as a thermosensor. Unfolded proteins bind initially to DnaJ; upon interaction with the DnaJ-bound protein, DnaK hydrolyzes its bound ATP, resulting in the formation of a stable complex. GrpE releases ADP from DnaK; ATP binding to DnaK triggers the release of the substrate protein, thus completing the reaction cycle. Several rounds of ATP-dependent interactions between DnaJ, DnaK and GrpE are required for fully efficient folding. The sequence is that of Protein GrpE from Azoarcus sp. (strain BH72).